The following is a 211-amino-acid chain: Protein-methionine-sulfoxide reductase heme-binding subunit MsrQ (211 aa).

The next 6 membrane-spanning stretches (helical) occupy residues 8 to 28 (VIWL…WLVW), 54 to 74 (FLLA…PLLI), 82 to 102 (LWCF…ELGV), 116 to 136 (PYLT…FTST), 153 to 173 (FVYL…KIIS), and 178 to 198 (IYAG…LSLF).

Belongs to the MsrQ family. In terms of assembly, heterodimer of a catalytic subunit (MsrP) and a heme-binding subunit (MsrQ). The cofactor is FMN. Heme b is required as a cofactor.

Its subcellular location is the cell inner membrane. Part of the MsrPQ system that repairs oxidized periplasmic proteins containing methionine sulfoxide residues (Met-O), using respiratory chain electrons. Thus protects these proteins from oxidative-stress damage caused by reactive species of oxygen and chlorine generated by the host defense mechanisms. MsrPQ is essential for the maintenance of envelope integrity under bleach stress, rescuing a wide series of structurally unrelated periplasmic proteins from methionine oxidation, including the primary periplasmic chaperone SurA and the lipoprotein Pal. MsrQ provides electrons for reduction to the reductase catalytic subunit MsrP, using the quinone pool of the respiratory chain. The sequence is that of Protein-methionine-sulfoxide reductase heme-binding subunit MsrQ from Shigella flexneri.